A 366-amino-acid polypeptide reads, in one-letter code: tRNA 2-selenouridine synthase (366 aa).

Residues 14-137 (LLENRPLIDV…IRSFLINTIE (124 aa)) form the Rhodanese domain. Catalysis depends on Cys97, which acts as the S-selanylcysteine intermediate.

Belongs to the SelU family. As to quaternary structure, monomer.

It carries out the reaction 5-methylaminomethyl-2-thiouridine(34) in tRNA + selenophosphate + (2E)-geranyl diphosphate + H2O + H(+) = 5-methylaminomethyl-2-selenouridine(34) in tRNA + (2E)-thiogeraniol + phosphate + diphosphate. It catalyses the reaction 5-methylaminomethyl-2-thiouridine(34) in tRNA + (2E)-geranyl diphosphate = 5-methylaminomethyl-S-(2E)-geranyl-thiouridine(34) in tRNA + diphosphate. The enzyme catalyses 5-methylaminomethyl-S-(2E)-geranyl-thiouridine(34) in tRNA + selenophosphate + H(+) = 5-methylaminomethyl-2-(Se-phospho)selenouridine(34) in tRNA + (2E)-thiogeraniol. The catalysed reaction is 5-methylaminomethyl-2-(Se-phospho)selenouridine(34) in tRNA + H2O = 5-methylaminomethyl-2-selenouridine(34) in tRNA + phosphate. Functionally, involved in the post-transcriptional modification of the uridine at the wobble position (U34) of tRNA(Lys), tRNA(Glu) and tRNA(Gln). Catalyzes the conversion of 2-thiouridine (S2U-RNA) to 2-selenouridine (Se2U-RNA). Acts in a two-step process involving geranylation of 2-thiouridine (S2U) to S-geranyl-2-thiouridine (geS2U) and subsequent selenation of the latter derivative to 2-selenouridine (Se2U) in the tRNA chain. The polypeptide is tRNA 2-selenouridine synthase (Shewanella frigidimarina (strain NCIMB 400)).